Consider the following 2415-residue polypeptide: Spectrin alpha chain, erythrocytic 1 (2415 aa).

Spectrin repeat units follow at residues 52–152 (YHYQ…SDVL), 157–259 (KFYQ…ESLS), 263–365 (DLQR…AKLK), 370–471 (YHRF…HQYR), 475–576 (DFHL…RKLL), 580–681 (QLLQ…GTQL), 686–787 (QLLQ…KKKL), 792–894 (KLQQ…NDLK), and 898–967 (QLQQ…QQQQ). Residue Ser257 is modified to Phosphoserine. In terms of domain architecture, SH3 spans 975 to 1034 (GREARVIALYDFEARSRREVSMKKNDVLTLLSSINKDWWKVEADDHQGFVPAVYVRKLAP). Ser990 carries the phosphoserine modification. Spectrin repeat units follow at residues 1085–1177 (LAYE…YQLL), 1183–1285 (VEMF…SLNE), 1287–1390 (HKFF…KMLD), 1394–1489 (ELQL…QLLT), 1499–1603 (DLKQ…KLNE), 1606–1709 (RQQR…KLKE), 1712–1815 (ALFQ…NLEE), 1818–1921 (EYLQ…SQLD), 1924–2029 (HAFQ…KLLE), 2040–2142 (LFME…QELQ), and 2154–2254 (MCQE…NLEQ). A Phosphoserine modification is found at Ser1972. EF-hand domains are found at residues 2267–2302 (ETLK…LNYY), 2310–2345 (EPEP…KESE), and 2347–2382 (IKTS…EQVS). Ca(2+) is bound by residues Asp2280, Asn2282, Thr2284, Arg2286, Glu2291, Asp2323, Tyr2329, and Asp2334.

It belongs to the spectrin family. As to quaternary structure, composed of non-homologous chains, alpha and beta, which aggregate to form dimers, tetramers, and higher polymers. Interacts with FASLG. Interacts with BCAM.

The protein localises to the cytoplasm. It is found in the cytoskeleton. It localises to the cell cortex. Its function is as follows. Spectrin is the major constituent of the cytoskeletal network underlying the erythrocyte plasma membrane. It associates with band 4.1 and actin to form the cytoskeletal superstructure of the erythrocyte plasma membrane. The protein is Spectrin alpha chain, erythrocytic 1 (Spta1) of Mus musculus (Mouse).